The chain runs to 72 residues: Translation initiation factor IF-1 (72 aa).

In terms of domain architecture, S1-like spans 1-72 (MAKSDVIEME…SKGRIVYRAR (72 aa)).

The protein belongs to the IF-1 family. As to quaternary structure, component of the 30S ribosomal translation pre-initiation complex which assembles on the 30S ribosome in the order IF-2 and IF-3, IF-1 and N-formylmethionyl-tRNA(fMet); mRNA recruitment can occur at any time during PIC assembly.

The protein localises to the cytoplasm. One of the essential components for the initiation of protein synthesis. Stabilizes the binding of IF-2 and IF-3 on the 30S subunit to which N-formylmethionyl-tRNA(fMet) subsequently binds. Helps modulate mRNA selection, yielding the 30S pre-initiation complex (PIC). Upon addition of the 50S ribosomal subunit IF-1, IF-2 and IF-3 are released leaving the mature 70S translation initiation complex. The sequence is that of Translation initiation factor IF-1 from Marinobacter nauticus (strain ATCC 700491 / DSM 11845 / VT8) (Marinobacter aquaeolei).